We begin with the raw amino-acid sequence, 130 residues long: Small ribosomal subunit protein uS11 (130 aa).

This sequence belongs to the universal ribosomal protein uS11 family. In terms of assembly, part of the 30S ribosomal subunit. Interacts with proteins S7 and S18. Binds to IF-3.

Its function is as follows. Located on the platform of the 30S subunit, it bridges several disparate RNA helices of the 16S rRNA. Forms part of the Shine-Dalgarno cleft in the 70S ribosome. The chain is Small ribosomal subunit protein uS11 from Psychrobacter sp. (strain PRwf-1).